Here is a 370-residue protein sequence, read N- to C-terminus: Dual-specificity RNA methyltransferase RlmN (370 aa).

The Proton acceptor role is filled by E93. The Radical SAM core domain maps to 99–331 (DRKRGTLCVS…TRVRRTRGDD (233 aa)). Residues C106 and C336 are joined by a disulfide bond. Residues C113, C117, and C120 each coordinate [4Fe-4S] cluster. S-adenosyl-L-methionine-binding positions include 162–163 (GE), S194, 216–218 (SLH), and N293. C336 functions as the S-methylcysteine intermediate in the catalytic mechanism.

Belongs to the radical SAM superfamily. RlmN family. Requires [4Fe-4S] cluster as cofactor.

Its subcellular location is the cytoplasm. The catalysed reaction is adenosine(2503) in 23S rRNA + 2 reduced [2Fe-2S]-[ferredoxin] + 2 S-adenosyl-L-methionine = 2-methyladenosine(2503) in 23S rRNA + 5'-deoxyadenosine + L-methionine + 2 oxidized [2Fe-2S]-[ferredoxin] + S-adenosyl-L-homocysteine. The enzyme catalyses adenosine(37) in tRNA + 2 reduced [2Fe-2S]-[ferredoxin] + 2 S-adenosyl-L-methionine = 2-methyladenosine(37) in tRNA + 5'-deoxyadenosine + L-methionine + 2 oxidized [2Fe-2S]-[ferredoxin] + S-adenosyl-L-homocysteine. Its function is as follows. Specifically methylates position 2 of adenine 2503 in 23S rRNA and position 2 of adenine 37 in tRNAs. m2A2503 modification seems to play a crucial role in the proofreading step occurring at the peptidyl transferase center and thus would serve to optimize ribosomal fidelity. The polypeptide is Dual-specificity RNA methyltransferase RlmN (Coxiella burnetii (strain CbuK_Q154) (Coxiella burnetii (strain Q154))).